We begin with the raw amino-acid sequence, 339 residues long: Isopentenyl-diphosphate delta-isomerase (339 aa).

7–8 (RK) lines the substrate pocket. FMN-binding positions include Ser65, 66-68 (SMT), Ser96, and Asn125. Residue 96–98 (SQR) coordinates substrate. Gln160 contacts substrate. Residue Glu161 participates in Mg(2+) binding. Residues Lys192, Thr222, and 293 to 294 (AG) each bind FMN.

The protein belongs to the IPP isomerase type 2 family. Homooctamer. Dimer of tetramers. It depends on FMN as a cofactor. NADPH is required as a cofactor. The cofactor is Mg(2+).

It is found in the cytoplasm. The catalysed reaction is isopentenyl diphosphate = dimethylallyl diphosphate. In terms of biological role, involved in the biosynthesis of isoprenoids. Catalyzes the 1,3-allylic rearrangement of the homoallylic substrate isopentenyl (IPP) to its allylic isomer, dimethylallyl diphosphate (DMAPP). This Vibrio campbellii (strain ATCC BAA-1116) protein is Isopentenyl-diphosphate delta-isomerase.